A 634-amino-acid polypeptide reads, in one-letter code: Serine/threonine kinase NLK (634 aa).

The Protein kinase domain maps to 240-531; the sequence is SQPDRPIGYG…VEEALQHRYL (292 aa). ATP is bound by residues 246–254 and K269; that span reads IGYGAFGVV. Residue D366 is the Proton acceptor of the active site.

It belongs to the protein kinase superfamily. CMGC Ser/Thr protein kinase family. MAP kinase subfamily. Component of the beta-catenin-lit-1 complex (also called the lit-1/wrm-1 complex or the wrm-1/lit-1 kinase complex) at least composed of lit-1 and wrm-1. Interacts with wrm-1 (via N-terminus); the interaction is direct and activates lit-1 kinase activity which leads to the phosphorylation of pop-1. This promotes pop-1 interaction with par-5 and translocation of pop-1 from the nucleus to the cytoplasm. Interacts with pop-1 (when phosphorylated on 'Ser-118' and 'Ser-127'); the interaction is dependent on the beta-catenin-lit-1 complex. Mg(2+) is required as a cofactor. As to expression, expressed in the pharynx and seam and vulval cells.

Its subcellular location is the cytoplasm. The protein resides in the cell cortex. It localises to the nucleus. It carries out the reaction L-seryl-[protein] + ATP = O-phospho-L-seryl-[protein] + ADP + H(+). It catalyses the reaction L-threonyl-[protein] + ATP = O-phospho-L-threonyl-[protein] + ADP + H(+). Has a role in the Wnt signaling pathway controlling the asymmetry of cell divisions during embryogenesis. Operates in the AB and EMS cell lineages influencing cell specification. Required for body wall muscle development, endoderm development, pop-1 asymmetry and T-cell division asymmetry. Component of the beta-catenin-lit-1 complex which promotes the phosphorylation, down-regulation and subcellular relocation of pop-1. Regulates plp-1 nuclear localization in embryos. Plays a role in male tail tip morphogenesis. This chain is Serine/threonine kinase NLK, found in Caenorhabditis elegans.